Here is a 338-residue protein sequence, read N- to C-terminus: Ketol-acid reductoisomerase (NADP(+)) (338 aa).

The KARI N-terminal Rossmann domain occupies 1 to 181 (MKVFYDKDCD…GGGKAGIIET (181 aa)). Residues 24–27 (YGSQ), R47, and S52 contribute to the NADP(+) site. H107 is an active-site residue. G133 is a binding site for NADP(+). The 146-residue stretch at 182–327 (NFREETETDL…GKLRAMMPWI (146 aa)) folds into the KARI C-terminal knotted domain. 4 residues coordinate Mg(2+): D190, E194, E226, and E230. S251 is a binding site for substrate.

Belongs to the ketol-acid reductoisomerase family. Mg(2+) is required as a cofactor.

The enzyme catalyses (2R)-2,3-dihydroxy-3-methylbutanoate + NADP(+) = (2S)-2-acetolactate + NADPH + H(+). It carries out the reaction (2R,3R)-2,3-dihydroxy-3-methylpentanoate + NADP(+) = (S)-2-ethyl-2-hydroxy-3-oxobutanoate + NADPH + H(+). It participates in amino-acid biosynthesis; L-isoleucine biosynthesis; L-isoleucine from 2-oxobutanoate: step 2/4. Its pathway is amino-acid biosynthesis; L-valine biosynthesis; L-valine from pyruvate: step 2/4. Functionally, involved in the biosynthesis of branched-chain amino acids (BCAA). Catalyzes an alkyl-migration followed by a ketol-acid reduction of (S)-2-acetolactate (S2AL) to yield (R)-2,3-dihydroxy-isovalerate. In the isomerase reaction, S2AL is rearranged via a Mg-dependent methyl migration to produce 3-hydroxy-3-methyl-2-ketobutyrate (HMKB). In the reductase reaction, this 2-ketoacid undergoes a metal-dependent reduction by NADPH to yield (R)-2,3-dihydroxy-isovalerate. This chain is Ketol-acid reductoisomerase (NADP(+)), found in Polaromonas naphthalenivorans (strain CJ2).